A 359-amino-acid polypeptide reads, in one-letter code: Protein RecA (359 aa).

Position 77-84 (77-84 (GPESSGKT)) interacts with ATP.

It belongs to the RecA family.

The protein localises to the cytoplasm. Can catalyze the hydrolysis of ATP in the presence of single-stranded DNA, the ATP-dependent uptake of single-stranded DNA by duplex DNA, and the ATP-dependent hybridization of homologous single-stranded DNAs. It interacts with LexA causing its activation and leading to its autocatalytic cleavage. The chain is Protein RecA from Paramagnetospirillum magneticum (strain ATCC 700264 / AMB-1) (Magnetospirillum magneticum).